The following is a 142-amino-acid chain: Large ribosomal subunit protein uL13 (142 aa).

It belongs to the universal ribosomal protein uL13 family. In terms of assembly, part of the 50S ribosomal subunit.

This protein is one of the early assembly proteins of the 50S ribosomal subunit, although it is not seen to bind rRNA by itself. It is important during the early stages of 50S assembly. This is Large ribosomal subunit protein uL13 from Aliivibrio salmonicida (strain LFI1238) (Vibrio salmonicida (strain LFI1238)).